The following is a 484-amino-acid chain: Probable D-lactate dehydrogenase, mitochondrial (484 aa).

The transit peptide at 1 to 52 directs the protein to the mitochondrion; sequence MAMLLRVATQRLSPWRSFCSRGSQGGLSQDFVEALKAVVGSPHVSTASAVRE. Position 36 is an N6-acetyllysine (Lys-36). Positions 62–242 constitute an FAD-binding PCMH-type domain; it reads RCQPPDAVVW…TSTTLRLHPA (181 aa). Lys-292 bears the N6-acetyllysine mark. Lys-335 bears the N6-acetyllysine; alternate mark. The residue at position 335 (Lys-335) is an N6-succinyllysine; alternate. An N6-acetyllysine mark is found at Lys-422 and Lys-449.

This sequence belongs to the FAD-binding oxidoreductase/transferase type 4 family. Interacts with CSRP3. FAD is required as a cofactor. In terms of tissue distribution, readily detected in liver and kidney, with a weaker signal observed in heart, skeletal muscle, stomach, brain, and lung.

The protein resides in the mitochondrion. The enzyme catalyses (R)-lactate + 2 Fe(III)-[cytochrome c] = 2 Fe(II)-[cytochrome c] + pyruvate + 2 H(+). In terms of biological role, involved in D-lactate, but not L-lactate catabolic process. In Mus musculus (Mouse), this protein is Probable D-lactate dehydrogenase, mitochondrial.